A 137-amino-acid chain; its full sequence is uncharacterized protein (137 aa).

4 consecutive transmembrane segments (helical) span residues 20 to 39 (YGKI…GYAV), 44 to 61 (WFIT…LSLV), 86 to 105 (VEIF…ALDL), and 109 to 131 (AALA…YGYY).

It localises to the cell membrane. This is an uncharacterized protein from Archaeoglobus fulgidus (strain ATCC 49558 / DSM 4304 / JCM 9628 / NBRC 100126 / VC-16).